Consider the following 356-residue polypeptide: Galactosylgalactosylxylosylprotein 3-beta-glucuronosyltransferase sqv-8 (356 aa).

The Cytoplasmic portion of the chain corresponds to 1 to 9 (MFPSRLLEK). The chain crosses the membrane as a helical; Signal-anchor for type II membrane protein span at residues 10–30 (WWLRAFIALVIFFVWQLFYAI). Residues 31–356 (NRVQSLEEER…LEAHALGVDN (326 aa)) are Lumenal-facing. Residues Asn93 and Asn173 are each glycosylated (N-linked (GlcNAc...) asparagine). Asp208 is a binding site for Mn(2+). N-linked (GlcNAc...) asparagine glycans are attached at residues Asn246 and Asn272. The Proton acceptor role is filled by Glu294.

This sequence belongs to the glycosyltransferase 43 family.

Its subcellular location is the membrane. It carries out the reaction 3-O-(beta-D-galactosyl-(1-&gt;3)-beta-D-galactosyl-(1-&gt;4)-beta-D-xylosyl)-L-seryl-[protein] + UDP-alpha-D-glucuronate = 3-O-(beta-D-GlcA-(1-&gt;3)-beta-D-Gal-(1-&gt;3)-beta-D-Gal-(1-&gt;4)-beta-D-Xyl)-L-seryl-[protein] + UDP + H(+). Glycosyltransferase required for the biosynthesis of the tetrasaccharide (GlcA-Gal-Gal-Xyl-)Ser core linker of heparan sulfate and chondroitin sulfate. May be involved in the biosynthesis of the HNK-1 carbohydrate epitope on glycoproteins. Required for embryonic development. Involved in the elongation of the pharyngeal isthmus during the later stages of embryonic development. Involved in vulval epithelium invagination. In Caenorhabditis elegans, this protein is Galactosylgalactosylxylosylprotein 3-beta-glucuronosyltransferase sqv-8 (sqv-8).